A 1159-amino-acid chain; its full sequence is Calcium-activated potassium channel subunit alpha-1 (1159 aa).

At 1–24 (EPNMDALIIPVTMEVPCDSRGQRM) the chain is on the extracellular side. Residues 25 to 45 (WWAFLASSMVTFFGGLFIILL) form a helical membrane-spanning segment. The Cytoplasmic portion of the chain corresponds to 46-116 (WRTLKYLWTV…MISAQTLTGR (71 aa)). 3 S-palmitoyl cysteine lipidation sites follow: Cys-56, Cys-57, and Cys-59. The chain crosses the membrane as a helical span at residues 117-137 (VLVVLVFALSIGALVIYFIDS). The Extracellular segment spans residues 138–152 (SNPIESCQNFYKDFT). Residues 153–173 (LQIDMAFNVFFLLYFGLRFIA) traverse the membrane as a helical segment. At 174-177 (ANDN) the chain is on the cytoplasmic side. Residues 178-198 (LWFWLEVNSVVDFFTVPPVFV) form a helical membrane-spanning segment. Topologically, residues 199–202 (SVYL) are extracellular. The helical; Voltage-sensor transmembrane segment at 203 to 223 (NRSWLGLRFLRALRLIQFSEI) threads the bilayer. The Cytoplasmic portion of the chain corresponds to 224-238 (LQFLNILKTSNSIKL). Residues 239-259 (VNLLSIFISTWLTAAGFIHLV) traverse the membrane as a helical segment. Over 260 to 273 (ENSGDPWENFQNSQ) the chain is Extracellular. An intramembrane region (pore-forming) is located at residues 274–296 (ALTYWECVYLLMVTMSTVGYGDV). The Selectivity for potassium motif lies at 290–293 (TVGY). Over 297–305 (YAKTTPGGL) the chain is Extracellular. A helical membrane pass occupies residues 306–326 (FIVFFILGGLAMFASYVPEII). Residues 327 to 1159 (EIIGNRKKYG…PPIREVEDEC (833 aa)) are Cytoplasmic-facing. The RCK N-terminal 1 domain maps to 345–487 (RKHIVVCGHI…WNWKEGDDAI (143 aa)). Mg(2+)-binding residues include Glu-377, Gln-400, and Glu-402. A segment S7 region spans residues 494 to 514 (LGFIAQSCLAQGLSTMLANLF). The segment at 551–571 (LSFPTVCELCFVKLKLLMIAI) is segment S8. The segment at 615–619 (CKACH) is heme-binding motif. The segment at 639 to 668 (EQPSTLSPKKKQRNGGMRNSPSSSPKLMRH) is disordered. The residue at position 643 (Thr-643) is a Phosphothreonine. 3 positions are modified to phosphoserine: Ser-645, Ser-658, and Ser-662. A segment S9 region spans residues 717-737 (VLSGHVVVCIFGHVSSALIGL). In terms of domain architecture, RCK N-terminal 2 spans 719 to 863 (SGHVVVCIFG…MDKSSPDNSP (145 aa)). Thr-850 bears the Phosphothreonine mark. Residues Ser-858 and Ser-862 each carry the phosphoserine modification. The Calcium bowl signature appears at 883–905 (TELVNDTNVQFLDQDDDDDPDTE). Gln-892, Asp-895, Asp-898, and Asp-900 together coordinate Ca(2+). Residues 912-932 (FACGTAFAVSVLDSLMSATYF) form a segment S10 region. The span at 1066–1091 (RASLSHSSHSSQSSSKKSSSVHSIPS) shows a compositional bias: low complexity. Residues 1066-1124 (RASLSHSSHSSQSSSKKSSSVHSIPSTANRQNRPKSRESRDKQTEKKWFTDEPDNAYPR) form a disordered region. The span at 1100–1115 (KSRESRDKQTEKKWFT) shows a compositional bias: basic and acidic residues. Phosphoserine is present on residues Ser-1101 and Ser-1104.

It belongs to the potassium channel family. Calcium-activated (TC 1.A.1.3) subfamily. KCa1.1/KCNMA1 sub-subfamily. As to quaternary structure, homotetramer; which constitutes the calcium-activated potassium channel. Interacts with beta subunits KCNMB1, KCNMB2, KCNMB3 and KCNMB4. Interacts with gamma subunits LRRC26, LRRC38, LRRC52 and LRRC55. Beta and gamma subunits are accessory, and modulate its activity. Interacts with RAB11B. Phosphorylated. Phosphorylation by kinases such as PKA and/or PKG. In smooth muscles, phosphorylation affects its activity. Post-translationally, palmitoylation by ZDHHC22 and ZDHHC23 within the intracellular linker between the S0 and S1 transmembrane domains regulates localization to the plasma membrane. Depalmitoylated by LYPLA1 and LYPLAL1, leading to retard exit from the trans-Golgi network. In terms of tissue distribution, expressed in all vascular and smooth muscles.

The protein resides in the cell membrane. The catalysed reaction is K(+)(in) = K(+)(out). Ethanol and carbon monoxide-bound heme increase channel activation. Heme inhibits channel activation. Functionally, potassium channel activated by both membrane depolarization or increase in cytosolic Ca(2+) that mediates export of K(+). It is also activated by the concentration of cytosolic Mg(2+). Its activation dampens the excitatory events that elevate the cytosolic Ca(2+) concentration and/or depolarize the cell membrane. It therefore contributes to repolarization of the membrane potential. Plays a key role in controlling excitability in a number of systems, such as regulation of the contraction of smooth muscle, the tuning of hair cells in the cochlea, regulation of transmitter release, and innate immunity. In smooth muscles, its activation by high level of Ca(2+), caused by ryanodine receptors in the sarcoplasmic reticulum, regulates the membrane potential. In cochlea cells, its number and kinetic properties partly determine the characteristic frequency of each hair cell and thereby helps to establish a tonotopic map. Kinetics of KCNMA1 channels are determined by alternative splicing, phosphorylation status and its combination with modulating beta subunits. Highly sensitive to both iberiotoxin (IbTx) and charybdotoxin (CTX). This Canis lupus familiaris (Dog) protein is Calcium-activated potassium channel subunit alpha-1 (KCNMA1).